Reading from the N-terminus, the 404-residue chain is Plasma serine protease inhibitor (404 aa).

Residues 1–19 form the signal peptide; the sequence is MRLCLFLCLVLLGPRMATL. Positions 20–24 are cleaved as a propeptide — removed in mature form; the sequence is RRSQK. 2 O-linked (GalNAc...) threonine glycosylation sites follow: Thr-35 and Thr-36. N-linked (GlcNAc...) asparagine glycosylation is found at Asn-245, Asn-258, and Asn-334.

The protein belongs to the serpin family. As to quaternary structure, forms protease inhibiting heterodimers in extracellular body fluids with serine proteases such as activated protein C/coagulation factor V/F5, acrosin/ACR, chymotrypsinogen B/CTRB1, prothrombin/F2, factor Xa/F10, factor XI/F11, kallikrein/KLKB1, tissue kallikrein, trypsin/PRSS1, prostate specific antigen/KLK3, tissue plasminogen activator/PLAT and urinary plasminogen activator/PLAU. Forms membrane-anchored serine proteases inhibiting heterodimers with TMPRSS7 and TMPRSS11E. Interacts with SEMG2. In terms of processing, N-glycosylated; glycans consist of a mixture of sialylated bi- (including sialyl-Lewis X epitopes), tri- and tetra-antennary complex-type chains; affects the maximal heparin- and thrombomodulin-enhanced rates of thrombin inhibition. O-glycosylated; further modified with 2 sialic acid residues. Proteolytically cleaved at the N-terminus; inhibits slightly the heparin- and thrombomodulin-enhanced rates of thrombin inhibition. N- and O-glycosylated. Post-translationally, proteolytically cleaved. Inhibition of proteases is accompanied by formation of a stable enzyme-inhibitor complex and by degradation of the serpin to lower molecular weight derivatives. Expressed strongly in the liver, and moderately in the kidney and testis, but not in other tissues tested.

It is found in the secreted. Its subcellular location is the extracellular space. With respect to regulation, its inhibitory activity is greatly enhanced in the presence of glycosaminoglycans, heparin, thrombomodulin and phospholipids vesicles. In terms of biological role, heparin-dependent serine protease inhibitor acting in body fluids and secretions. Inactivates serine proteases by binding irreversibly to their serine activation site. Involved in the regulation of intravascular and extravascular proteolytic activities. Plays hemostatic roles in the blood plasma. Acts as a procoagulant and pro-inflammatory factor by inhibiting the anticoagulant activated protein C factor as well as the generation of activated protein C factor by the thrombin/thrombomodulin complex. Acts as an anticoagulant factor by inhibiting blood coagulation factors like prothrombin, factor XI, factor Xa, plasma kallikrein and fibrinolytic enzymes such as tissue- and urinary-type plasminogen activators. In seminal plasma, inactivates several serine proteases implicated in the reproductive system. Inhibits the serpin acrosin; indirectly protects component of the male genital tract from being degraded by excessive released acrosin. Inhibits tissue- and urinary-type plasminogen activator, prostate-specific antigen and kallikrein activities; has a control on the sperm motility and fertilization. Inhibits the activated protein C-catalyzed degradation of SEMG1 and SEMG2; regulates the degradation of semenogelin during the process of transfer of spermatozoa from the male reproductive tract into the female tract. In urine, inhibits urinary-type plasminogen activator and kallikrein activities. Inactivates membrane-anchored serine proteases activities such as MPRSS7 and TMPRSS11E. Inhibits urinary-type plasminogen activator-dependent tumor cell invasion and metastasis. May also play a non-inhibitory role in seminal plasma and urine as a hydrophobic hormone carrier by its binding to retinoic acid. This chain is Plasma serine protease inhibitor (SERPINA5), found in Bos taurus (Bovine).